The chain runs to 92 residues: Small ribosomal subunit protein bS20 (92 aa).

It belongs to the bacterial ribosomal protein bS20 family.

In terms of biological role, binds directly to 16S ribosomal RNA. The polypeptide is Small ribosomal subunit protein bS20 (Magnetococcus marinus (strain ATCC BAA-1437 / JCM 17883 / MC-1)).